The sequence spans 1312 residues: Retinoblastoma-like protein A (1312 aa).

Disordered regions lie at residues 1–67 (MMAH…NNEN), 168–231 (SSSS…KNSS), 336–359 (HNYN…NNNN), 536–611 (NNNN…IYGT), 987–1023 (NNNN…NNNN), 1168–1236 (KKND…NNTE), and 1249–1312 (EESP…RLKS). Positions 10-67 (TNINTKTTAPTTTTTEQQPEQQQQQPEQQQQEKQNNNNNNNNNNNNNNNINNNENNEN) are enriched in low complexity. A coiled-coil region spans residues 36 to 117 (EQQQQEKQNN…TSSALNVDQD (82 aa)). Residues 168 to 179 (SSSSFQPDNNSK) show a composition bias toward polar residues. A compositionally biased stretch (basic residues) spans 180-189 (IKGRKIRKTN). Residues 195–230 (NNDSNEEEEETTTDTEEEEEEDTLLNENNNSINKNS) are a coiled coil. The span at 198-218 (SNEEEEETTTDTEEEEEEDTL) shows a compositional bias: acidic residues. 3 stretches are compositionally biased toward low complexity: residues 219 to 231 (LNEN…KNSS), 337 to 359 (NYNN…NNNN), and 536 to 595 (NNNN…SSSS). Low complexity-rich tracts occupy residues 1185 to 1234 (NNNN…NNNN), 1251 to 1275 (SPST…NNNK), and 1286 to 1305 (SPSS…SSSG).

The protein belongs to the retinoblastoma protein (RB) family.

The protein resides in the nucleus. Key regulator of entry into cell division. Directly involved in heterochromatin formation by maintaining overall chromatin structure and, in particular, that of constitutive heterochromatin by stabilizing histone methylation. Controls histone H4 'Lys-20' trimethylation. Probably acts as a transcription repressor by recruiting chromatin-modifying enzymes to promoters. Plays a dual role, regulating cell-cycle progression and transcriptional events leading to terminal differentiation. In the absence of a G1 phase, functions in late G2 controlling the expression of both S-phase and mitotic genes. Controls stalk/spore preference by suppressing the DIF response in cells destined for the spore pathway. DIF is a chlorinated hydroxyphenone made by cells of spore pathway that promotes stalk differentiation. In Dictyostelium discoideum (Social amoeba), this protein is Retinoblastoma-like protein A.